Consider the following 372-residue polypeptide: Aminomethyltransferase (372 aa).

This sequence belongs to the GcvT family. The glycine cleavage system is composed of four proteins: P, T, L and H.

It carries out the reaction N(6)-[(R)-S(8)-aminomethyldihydrolipoyl]-L-lysyl-[protein] + (6S)-5,6,7,8-tetrahydrofolate = N(6)-[(R)-dihydrolipoyl]-L-lysyl-[protein] + (6R)-5,10-methylene-5,6,7,8-tetrahydrofolate + NH4(+). The glycine cleavage system catalyzes the degradation of glycine. The sequence is that of Aminomethyltransferase from Burkholderia cenocepacia (strain ATCC BAA-245 / DSM 16553 / LMG 16656 / NCTC 13227 / J2315 / CF5610) (Burkholderia cepacia (strain J2315)).